We begin with the raw amino-acid sequence, 92 residues long: C-C motif chemokine 4 (92 aa).

Positions 1-23 (MKLGVTVLSVALLVAALCPPALS) are cleaved as a signal peptide. Cystine bridges form between C34-C58 and C35-C74.

Belongs to the intercrine beta (chemokine CC) family. Homodimer.

Its subcellular location is the secreted. In terms of biological role, monokine with inflammatory and chemokinetic properties. This is C-C motif chemokine 4 (CCL4) from Oryctolagus cuniculus (Rabbit).